The chain runs to 123 residues: Small ribosomal subunit protein uS12 (123 aa).

Residues alanine 9–glycine 32 are disordered. Aspartate 89 is modified (3-methylthioaspartic acid).

The protein belongs to the universal ribosomal protein uS12 family. In terms of assembly, part of the 30S ribosomal subunit. Contacts proteins S8 and S17. May interact with IF1 in the 30S initiation complex.

Functionally, with S4 and S5 plays an important role in translational accuracy. Interacts with and stabilizes bases of the 16S rRNA that are involved in tRNA selection in the A site and with the mRNA backbone. Located at the interface of the 30S and 50S subunits, it traverses the body of the 30S subunit contacting proteins on the other side and probably holding the rRNA structure together. The combined cluster of proteins S8, S12 and S17 appears to hold together the shoulder and platform of the 30S subunit. The sequence is that of Small ribosomal subunit protein uS12 from Bradyrhizobium sp. (strain BTAi1 / ATCC BAA-1182).